The primary structure comprises 103 residues: Large ribosomal subunit protein bL21 (103 aa).

It belongs to the bacterial ribosomal protein bL21 family. Part of the 50S ribosomal subunit. Contacts protein L20.

This protein binds to 23S rRNA in the presence of protein L20. This is Large ribosomal subunit protein bL21 from Legionella pneumophila (strain Lens).